The primary structure comprises 208 residues: MKDFLQKVNSYIKEAFGAGKYLYDGLSVTFDHLRRRPVTVQYPYEKLIPSERYRGRIHYEFDKCIACEVCVRVCPINLPVVDWVMNKETKKKELRNYSIDFGVCIFCGNCVEYCPTNCLSMTEEYELATFDRHNLNFDNVALGRLPTNVTTDPSVKPLRELAYLPKGVMDPHEVSSSDARVGKLPEEVYDWMKPKTNEMSDPAVKLNK.

2 4Fe-4S ferredoxin-type domains span residues 55-84 (GRIHYEFDKCIACEVCVRVCPINLPVVDWV) and 95-124 (RNYSIDFGVCIFCGNCVEYCPTNCLSMTEE). Cys-64, Cys-67, Cys-70, Cys-74, Cys-104, Cys-107, Cys-110, and Cys-114 together coordinate [4Fe-4S] cluster.

The protein belongs to the complex I 23 kDa subunit family. As to quaternary structure, NDH-1 is composed of at least 11 different subunits. The cofactor is [4Fe-4S] cluster.

The protein localises to the cellular thylakoid membrane. The catalysed reaction is a plastoquinone + NADH + (n+1) H(+)(in) = a plastoquinol + NAD(+) + n H(+)(out). It catalyses the reaction a plastoquinone + NADPH + (n+1) H(+)(in) = a plastoquinol + NADP(+) + n H(+)(out). Functionally, NDH-1 shuttles electrons from an unknown electron donor, via FMN and iron-sulfur (Fe-S) centers, to quinones in the respiratory and/or the photosynthetic chain. The immediate electron acceptor for the enzyme in this species is believed to be plastoquinone. Couples the redox reaction to proton translocation, and thus conserves the redox energy in a proton gradient. The sequence is that of NAD(P)H-quinone oxidoreductase subunit I from Prochlorococcus marinus (strain MIT 9515).